A 229-amino-acid chain; its full sequence is Uracil-DNA glycosylase (229 aa).

Catalysis depends on aspartate 64, which acts as the Proton acceptor.

This sequence belongs to the uracil-DNA glycosylase (UDG) superfamily. UNG family.

The protein resides in the cytoplasm. The enzyme catalyses Hydrolyzes single-stranded DNA or mismatched double-stranded DNA and polynucleotides, releasing free uracil.. In terms of biological role, excises uracil residues from the DNA which can arise as a result of misincorporation of dUMP residues by DNA polymerase or due to deamination of cytosine. In Escherichia coli (strain 55989 / EAEC), this protein is Uracil-DNA glycosylase.